Reading from the N-terminus, the 179-residue chain is SCAN domain-containing protein 1 (179 aa).

The interval 1–104 is disordered; sequence MAATEPILAA…PGPAGSRLGP (104 aa). The segment covering 52–80 has biased composition (low complexity); that stretch reads SPNAAVPEAIPTPRAAASAALELPLGPAP. Positions 108–166 constitute an SCAN box domain; it reads RQRFRQFRYQDAAGPREAFRQLRELSRQWLRPDIRTKEQIVEMLVQEQLLAILPEAARA.

As to quaternary structure, interacts with ZNF202.

The protein localises to the nucleus. Its function is as follows. May regulate transcriptional activity. This is SCAN domain-containing protein 1 (SCAND1) from Homo sapiens (Human).